A 394-amino-acid polypeptide reads, in one-letter code: Ribulose bisphosphate carboxylase large chain (394 aa).

N6,N6,N6-trimethyllysine is present on K5. Residues N114 and T164 each coordinate substrate. Residue K166 is the Proton acceptor of the active site. A substrate-binding site is contributed by K168. Positions 192, 194, and 195 each coordinate Mg(2+). K192 carries the post-translational modification N6-carboxylysine. H285 serves as the catalytic Proton acceptor. Substrate-binding residues include R286, H318, and S370.

It belongs to the RuBisCO large chain family. Type I subfamily. As to quaternary structure, heterohexadecamer of 8 large chains and 8 small chains. The cofactor is Mg(2+).

The protein resides in the plastid. Its subcellular location is the chloroplast. It catalyses the reaction 2 (2R)-3-phosphoglycerate + 2 H(+) = D-ribulose 1,5-bisphosphate + CO2 + H2O. It carries out the reaction D-ribulose 1,5-bisphosphate + O2 = 2-phosphoglycolate + (2R)-3-phosphoglycerate + 2 H(+). Functionally, ruBisCO catalyzes two reactions: the carboxylation of D-ribulose 1,5-bisphosphate, the primary event in carbon dioxide fixation, as well as the oxidative fragmentation of the pentose substrate in the photorespiration process. Both reactions occur simultaneously and in competition at the same active site. The protein is Ribulose bisphosphate carboxylase large chain (rbcL) of Barclaya longifolia (Orchid lily).